The primary structure comprises 388 residues: Alpha-2B adrenergic receptor (388 aa).

The chain crosses the membrane as a helical span at residues 1 to 25 (AIAAVITFLILFTIFGNALVILAVL). At 26–36 (TSRSLRAPQNL) the chain is on the cytoplasmic side. Residues 37–62 (FLVSLAAADILVATLIIPFSLANELL) form a helical membrane-spanning segment. Over 63 to 72 (GYWYFRRTWC) the chain is Extracellular. A disulfide bridge links cysteine 72 with cysteine 151. Residues 73 to 95 (EVYLALDVLFCTSSIVHLCAISL) traverse the membrane as a helical segment. The Cytoplasmic segment spans residues 96-117 (DRYWAVSRALEYNSKRTPRXIK). A helical transmembrane segment spans residues 118-140 (CIILTVWLIAAAISLPPLIYKGD). Residues 141–156 (QGPQPRGRPQCKLNQE) are Extracellular-facing. A helical membrane pass occupies residues 157–180 (AWYILSSSIGSFFAPCLIMILVYL). The Cytoplasmic portion of the chain corresponds to 181–352 (RIYVIAKRSN…LTREKRFTFV (172 aa)). The segment at 193-309 (GPRAKGASRE…ASACNPPLQQ (117 aa)) is disordered. Residues 239–249 (PTGEKEGKTPE) are compositionally biased toward basic and acidic residues. Acidic residues predominate over residues 279–291 (PEEEAEEEEEECE). Residues 292–302 (PQAAPASSASA) show a composition bias toward low complexity. The chain crosses the membrane as a helical span at residues 353-376 (LAVVIGVFVLCWFPFFFSYSLGAI). Residues 377 to 385 (CPQRCKVPH) lie on the Extracellular side of the membrane. Residues 386 to 388 (GLF) traverse the membrane as a helical segment.

This sequence belongs to the G-protein coupled receptor 1 family. Adrenergic receptor subfamily. ADRA2B sub-subfamily. Interacts with RAB26. Interacts with PPP1R9B.

The protein resides in the cell membrane. Alpha-2 adrenergic receptors mediate the catecholamine-induced inhibition of adenylate cyclase through the action of G proteins. The chain is Alpha-2B adrenergic receptor (ADRA2B) from Orycteropus afer (Aardvark).